The following is a 185-amino-acid chain: Dihydrofolate reductase (185 aa).

Residues 5–184 (KLNLIAAACD…ISYYFRVYKK (180 aa)) enclose the DHFR domain. Residues Ala-11 and 17 to 23 (GIGVNGA) each bind NADP(+). Residue 31–36 (EMAYFT) coordinates substrate. 55 to 57 (RRT) contributes to the NADP(+) binding site. Arg-71 is a substrate binding site. Residues 77–79 (THN) and 117–124 (GGSSIYRA) contribute to the NADP(+) site.

This sequence belongs to the dihydrofolate reductase family.

It catalyses the reaction (6S)-5,6,7,8-tetrahydrofolate + NADP(+) = 7,8-dihydrofolate + NADPH + H(+). It functions in the pathway cofactor biosynthesis; tetrahydrofolate biosynthesis; 5,6,7,8-tetrahydrofolate from 7,8-dihydrofolate: step 1/1. With respect to regulation, activated by dithiothreitol and p-chloromercuribenzoate. Inhibited by trimethoprim, methotrexate, sodium tetrathionate and hydroxymercuribenzoate. In terms of biological role, key enzyme in folate metabolism. Catalyzes an essential reaction for de novo glycine and purine synthesis, and for DNA precursor synthesis. This is Dihydrofolate reductase (DHFR) from Heliothis virescens (Tobacco budworm moth).